The primary structure comprises 154 residues: Endoribonuclease YbeY (154 aa).

Zn(2+)-binding residues include His-113, His-117, and His-123.

It belongs to the endoribonuclease YbeY family. Zn(2+) serves as cofactor.

It is found in the cytoplasm. In terms of biological role, single strand-specific metallo-endoribonuclease involved in late-stage 70S ribosome quality control and in maturation of the 3' terminus of the 16S rRNA. In Anaplasma marginale (strain Florida), this protein is Endoribonuclease YbeY.